A 75-amino-acid chain; its full sequence is Small ribosomal subunit protein bS18 (75 aa).

A compositionally biased stretch (basic residues) spans 1–11; the sequence is MAAKPFFRRRK. Residues 1–21 form a disordered region; the sequence is MAAKPFFRRRKTDPFEGENAP.

It belongs to the bacterial ribosomal protein bS18 family. Part of the 30S ribosomal subunit. Forms a tight heterodimer with protein bS6.

In terms of biological role, binds as a heterodimer with protein bS6 to the central domain of the 16S rRNA, where it helps stabilize the platform of the 30S subunit. The polypeptide is Small ribosomal subunit protein bS18 (Jannaschia sp. (strain CCS1)).